The sequence spans 150 residues: Aspartate 1-decarboxylase (150 aa).

The active-site Schiff-base intermediate with substrate; via pyruvic acid is serine 25. Serine 25 carries the post-translational modification Pyruvic acid (Ser). Threonine 57 is a binding site for substrate. Tyrosine 58 (proton donor) is an active-site residue. Position 73–75 (glycine 73–alanine 75) interacts with substrate.

Belongs to the PanD family. Heterooctamer of four alpha and four beta subunits. It depends on pyruvate as a cofactor. Post-translationally, is synthesized initially as an inactive proenzyme, which is activated by self-cleavage at a specific serine bond to produce a beta-subunit with a hydroxyl group at its C-terminus and an alpha-subunit with a pyruvoyl group at its N-terminus.

It localises to the cytoplasm. It catalyses the reaction L-aspartate + H(+) = beta-alanine + CO2. It functions in the pathway cofactor biosynthesis; (R)-pantothenate biosynthesis; beta-alanine from L-aspartate: step 1/1. Its function is as follows. Catalyzes the pyruvoyl-dependent decarboxylation of aspartate to produce beta-alanine. This is Aspartate 1-decarboxylase from Kocuria rhizophila (strain ATCC 9341 / DSM 348 / NBRC 103217 / DC2201).